Here is a 299-residue protein sequence, read N- to C-terminus: RGG repeats nuclear RNA binding protein A (299 aa).

The segment covering 1–21 (RGGGRGGPRGGGRGRGPGRGR) has biased composition (gly residues). Disordered stretches follow at residues 1-173 (RGGG…KEMT) and 232-299 (EAVE…LVAK). Basic and acidic residues predominate over residues 45 to 60 (RVQEDGESGKLSERRG). Positions 61 to 78 (GYGGPRGGFHGGRRGGFN) are enriched in gly residues. Basic and acidic residues-rich tracts occupy residues 86–98 (EGERPRRVFDRRS) and 134–146 (DGEKIVEAEKEAG). The Arginine-rich RNA-binding motif E-R-P-R-R-X-[F/Y]-[E/D]-R-R-S signature appears at 88–98 (ERPRRVFDRRS). Positions 267–278 (RGRGGFGGGVGG) are enriched in gly residues.

Belongs to the SERBP1-HABP4 family. Expressed in seedlings but not in roots.

The protein localises to the nucleus. It localises to the cytoplasm. The protein resides in the perinuclear region. Its function is as follows. Ribosome-binding protein that acts as a regulator of mRNA translation by promoting ribosome inactivation. Binds RNA. This Nicotiana tabacum (Common tobacco) protein is RGG repeats nuclear RNA binding protein A.